Consider the following 434-residue polypeptide: MTGAVTIIGGGLAGCEAAWQIAGRGVRVVLREMKPQRYSPAHHLSGLAELVCSNSLRGESLENAVGLLKEELRRAGSLIMAAADATRVPAGGALAVDRELFSSYVTERIEGHPLIELVREEVTELPAEGVLVIASGPLTSDALAERLKQITGDSLYFYDAIAPIVAADSLDSDKVFRASRYGKGDGDDYLNCPLSEEEYERFVDAVLAAEKVPARDFEKVVHFEGCMPVEEMAERGRETLRFGPLKPVGLTDPRTGREPHAVVQLRAENREGTLFNLVGFQTKLTWPEQRRVFRMIPGLESAEFVRLGSMHRNTFINAPTLLEPTFRLKGDPRTFFAGQITGVEGYVESAGSGFLAGINSARLVRGEDPAVPPPVTALGALVAHITTAPARHFQPMNVNYGLFPPLEGKVKKKDRRGRLAERALAELDHWLATV.

9–14 (GGGLAG) is a binding site for FAD.

The protein belongs to the MnmG family. TrmFO subfamily. FAD is required as a cofactor.

It localises to the cytoplasm. It catalyses the reaction uridine(54) in tRNA + (6R)-5,10-methylene-5,6,7,8-tetrahydrofolate + NADH + H(+) = 5-methyluridine(54) in tRNA + (6S)-5,6,7,8-tetrahydrofolate + NAD(+). The enzyme catalyses uridine(54) in tRNA + (6R)-5,10-methylene-5,6,7,8-tetrahydrofolate + NADPH + H(+) = 5-methyluridine(54) in tRNA + (6S)-5,6,7,8-tetrahydrofolate + NADP(+). Catalyzes the folate-dependent formation of 5-methyl-uridine at position 54 (M-5-U54) in all tRNAs. In Geobacter sulfurreducens (strain ATCC 51573 / DSM 12127 / PCA), this protein is Methylenetetrahydrofolate--tRNA-(uracil-5-)-methyltransferase TrmFO.